The sequence spans 500 residues: Cytochrome P450 11B3, mitochondrial (500 aa).

The transit peptide at 1-24 (MALRVTADVWLARPWQCLHRTRAL) directs the protein to the mitochondrion. Cys447 provides a ligand contact to heme.

This sequence belongs to the cytochrome P450 family. Heme serves as cofactor. In terms of tissue distribution, expressed in the adrenal cortex and in different brain tissues, including hippocampus, hypothalamus, cerebellum, cerebral cortex, and midbrain.

The protein resides in the mitochondrion membrane. The enzyme catalyses a steroid + 2 reduced [adrenodoxin] + O2 + 2 H(+) = an 11beta-hydroxysteroid + 2 oxidized [adrenodoxin] + H2O. The catalysed reaction is 21-hydroxyprogesterone + 2 reduced [adrenodoxin] + O2 + 2 H(+) = corticosterone + 2 oxidized [adrenodoxin] + H2O. It carries out the reaction 21-hydroxyprogesterone + 2 reduced [adrenodoxin] + O2 + 2 H(+) = 18-hydroxy-11-deoxycorticosterone + 2 oxidized [adrenodoxin] + H2O. It catalyses the reaction 21-hydroxyprogesterone + 2 reduced [adrenodoxin] + O2 + 2 H(+) = 19-hydroxy-11-deoxycorticosterone + 2 oxidized [adrenodoxin] + H2O. Functionally, a cytochrome P450 monooxygenase involved in the biosynthesis of adrenal corticoids. Catalyzes the hydroxylation of steroids at 11beta, 18- or 19-positions, with preferred regioselectivity at 11beta and 18. Converts 11-deoxycorticosterone into corticosterone, 18-hydroxy-11-deoxycorticosterone, and/or 19-hydroxy-11-deoxycorticosterone, but not to 18-hydroxycorticosterone or aldosterone. Mechanistically, uses molecular oxygen inserting one oxygen atom into a substrate for hydroxylation and reducing the second into a water molecule. Two electrons are provided by NADPH via a two-protein mitochondrial transfer system comprising flavoprotein FDXR (adrenodoxin/ferredoxin reductase) and nonheme iron-sulfur protein FDX1 or FDX2 (adrenodoxin/ferredoxin). The sequence is that of Cytochrome P450 11B3, mitochondrial (Cyp11b3) from Rattus norvegicus (Rat).